The following is a 341-amino-acid chain: HTH-type transcriptional repressor PurR (341 aa).

Residues 2–56 (ATIKDVAKRANVSTTTVSHVINKTRFVAEETRNAVWAAIKELHYSPSAVARSLKV) form the HTH lacI-type domain. Positions 4–23 (IKDVAKRANVSTTTVSHVIN) form a DNA-binding region, H-T-H motif. A DNA-binding region spans residues 48–56 (SAVARSLKV). Residues Y73, R190, T192, F221, and D275 each contribute to the hypoxanthine site.

In terms of assembly, homodimer.

It functions in the pathway purine metabolism; purine nucleotide biosynthesis [regulation]. In terms of biological role, is the main repressor of the genes involved in the de novo synthesis of purine nucleotides, regulating purB, purC, purEK, purF, purHD, purL, purMN and guaBA expression. In addition, it participates in the regulation or coregulation of genes involved in de novo pyrimidine nucleotide biosynthesis, salvage and uptake (pyrC, pyrD, carAB and codBA), and of several genes encoding enzymes necessary for nucleotide and polyamine biosynthesis (prsA, glyA, gcvTHP, speA, glnB). Binds to a 16-bp palindromic sequence located within the promoter region of pur regulon genes. The consensus binding sequence is 5'-ACGCAAACGTTTTCNT-3'. PurR is allosterically activated to bind its cognate DNA by binding the purine corepressors, hypoxanthine or guanine, thereby effecting transcription repression. The sequence is that of HTH-type transcriptional repressor PurR (purR) from Escherichia coli (strain K12).